The following is a 477-amino-acid chain: Bifunctional protein HldE (477 aa).

Residues 1 to 318 form a ribokinase region; that stretch reads MKVTLPEFER…ENAVRGRADT (318 aa). The residue at position 179 (lysine 179) is an N6-acetyllysine. 195–198 contributes to the ATP binding site; that stretch reads NLSE. The active site involves aspartate 264. Positions 344–477 are cytidylyltransferase; sequence MTNGVFDILH…IKKIQLDKKG (134 aa).

In the N-terminal section; belongs to the carbohydrate kinase PfkB family. The protein in the C-terminal section; belongs to the cytidylyltransferase family. As to quaternary structure, homodimer.

The enzyme catalyses D-glycero-beta-D-manno-heptose 7-phosphate + ATP = D-glycero-beta-D-manno-heptose 1,7-bisphosphate + ADP + H(+). The catalysed reaction is D-glycero-beta-D-manno-heptose 1-phosphate + ATP + H(+) = ADP-D-glycero-beta-D-manno-heptose + diphosphate. Its pathway is nucleotide-sugar biosynthesis; ADP-L-glycero-beta-D-manno-heptose biosynthesis; ADP-L-glycero-beta-D-manno-heptose from D-glycero-beta-D-manno-heptose 7-phosphate: step 1/4. The protein operates within nucleotide-sugar biosynthesis; ADP-L-glycero-beta-D-manno-heptose biosynthesis; ADP-L-glycero-beta-D-manno-heptose from D-glycero-beta-D-manno-heptose 7-phosphate: step 3/4. Functionally, catalyzes the phosphorylation of D-glycero-D-manno-heptose 7-phosphate at the C-1 position to selectively form D-glycero-beta-D-manno-heptose-1,7-bisphosphate. Its function is as follows. Catalyzes the ADP transfer from ATP to D-glycero-beta-D-manno-heptose 1-phosphate, yielding ADP-D-glycero-beta-D-manno-heptose. This Escherichia coli O81 (strain ED1a) protein is Bifunctional protein HldE.